The following is a 438-amino-acid chain: Trigger factor (438 aa).

The 86-residue stretch at 160-245 (DDKVTIDFVG…VKKIQQAELP (86 aa)) folds into the PPIase FKBP-type domain.

This sequence belongs to the FKBP-type PPIase family. Tig subfamily.

It localises to the cytoplasm. It catalyses the reaction [protein]-peptidylproline (omega=180) = [protein]-peptidylproline (omega=0). Involved in protein export. Acts as a chaperone by maintaining the newly synthesized protein in an open conformation. Functions as a peptidyl-prolyl cis-trans isomerase. The chain is Trigger factor from Francisella tularensis subsp. holarctica (strain OSU18).